The chain runs to 324 residues: MARIIITLTIPLFYFFFFSLLSHQTMSQPDHIFTVCNPTNNFTQTSSYETNRDTLLASLRESSSLGHYSNATEGLSPDTVHGMFLCRGDITTASCVDCVQTATTEIASNCTLNKRAVIYYDECMVRYSNVSFSSELEIVPSITIYSLRSAPNPTRFNQTLTEKFSELIFNVSSSSLVPYFVEDQERVTQSEGSYDLDTMVQCSPDLDIFNCTVCLRVAFFRISTCCGLPSYAKIFTPKCLLRFQTSVLLSPPPSPSAPPPRSPPPKSSPPSSLPQTPSPPLVFTPPQNVPNPSGSFSFNVLKGNVIFGRIVVTMTALVFALVDL.

A signal peptide spans 1-27 (MARIIITLTIPLFYFFFFSLLSHQTMS). 2 Gnk2-homologous domains span residues 29–132 (PDHI…NVSF) and 138–248 (IVPS…TSVL). A disordered region spans residues 251-286 (PPPSPSAPPPRSPPPKSSPPSSLPQTPSPPLVFTPP).

This sequence belongs to the cysteine-rich repeat secretory protein family.

It is found in the secreted. The polypeptide is Cysteine-rich repeat secretory protein 9 (CRRSP9) (Arabidopsis thaliana (Mouse-ear cress)).